Consider the following 205-residue polypeptide: Small ribosomal subunit protein uS4 (205 aa).

Residues Ser94–Val157 enclose the S4 RNA-binding domain.

Belongs to the universal ribosomal protein uS4 family. Part of the 30S ribosomal subunit. Contacts protein S5. The interaction surface between S4 and S5 is involved in control of translational fidelity.

Functionally, one of the primary rRNA binding proteins, it binds directly to 16S rRNA where it nucleates assembly of the body of the 30S subunit. With S5 and S12 plays an important role in translational accuracy. The chain is Small ribosomal subunit protein uS4 from Rickettsia conorii (strain ATCC VR-613 / Malish 7).